We begin with the raw amino-acid sequence, 305 residues long: UDP-3-O-acyl-N-acetylglucosamine deacetylase (305 aa).

Residues histidine 79, histidine 238, and aspartate 242 each contribute to the Zn(2+) site. Histidine 265 functions as the Proton donor in the catalytic mechanism.

It belongs to the LpxC family. Zn(2+) is required as a cofactor.

The catalysed reaction is a UDP-3-O-[(3R)-3-hydroxyacyl]-N-acetyl-alpha-D-glucosamine + H2O = a UDP-3-O-[(3R)-3-hydroxyacyl]-alpha-D-glucosamine + acetate. Its pathway is glycolipid biosynthesis; lipid IV(A) biosynthesis; lipid IV(A) from (3R)-3-hydroxytetradecanoyl-[acyl-carrier-protein] and UDP-N-acetyl-alpha-D-glucosamine: step 2/6. Functionally, catalyzes the hydrolysis of UDP-3-O-myristoyl-N-acetylglucosamine to form UDP-3-O-myristoylglucosamine and acetate, the committed step in lipid A biosynthesis. The chain is UDP-3-O-acyl-N-acetylglucosamine deacetylase from Salmonella typhi.